Reading from the N-terminus, the 202-residue chain is Protein lin-28 homolog A (202 aa).

Residues 1–31 are disordered; it reads MGSVSNQQFAGAKPGEEPSGDSPKAENESQP. Residues 33-106 enclose the CSD domain; sequence HGSGICKWFN…GLESIRVTGP (74 aa). Residues 107–130 are flexible linker; sequence GGVFCIGSERRPKSKSLQKRRSKG. 2 CCHC-type zinc fingers span residues 131–148 and 153–170; these read DRCYNCGGLDHHAKECKL and KKCHFCQSISHMVANCPA. Zn(2+) contacts are provided by C133, C136, H141, C146, C155, C158, H163, and C168. Residues 169–202 are disordered; it reads PAKAQQSPSSQGKPAYFREKEDMHSSALLPETRE.

Belongs to the lin-28 family. Monomer.

The protein localises to the cytoplasm. Its subcellular location is the rough endoplasmic reticulum. It is found in the P-body. The protein resides in the stress granule. It localises to the nucleus. The protein localises to the nucleolus. Its function is as follows. RNA-binding protein that inhibits processing of pre-let-7 miRNAs and regulates translation of mRNAs that control developmental timing, pluripotency and metabolism. Seems to recognize a common structural G-quartet (G4) feature in its miRNA and mRNA targets. 'Translational enhancer' that drives specific mRNAs to polysomes and increases the efficiency of protein synthesis. Its association with the translational machinery and target mRNAs results in an increased number of initiation events per molecule of mRNA and, indirectly, in mRNA stabilization. Suppressor of microRNA (miRNA) biogenesis, including that of let-7. Binds specific target miRNA precursors (pre-miRNAs), recognizing an 5'-GGAG-3' motif found in their terminal loop, and recruits uridylyltransferase. This results in the terminal uridylation of target pre-miRNAs. Uridylated pre-miRNAs fail to be processed by Dicer and undergo degradation. Localized to the periendoplasmic reticulum area, binds to a large number of spliced mRNAs and inhibits the translation of mRNAs destined for the ER, reducing the synthesis of transmembrane proteins, ER or Golgi lumen proteins, and secretory proteins. Binds to and enhances the translation of mRNAs for several metabolic enzymes, increasing glycolysis and oxidative phosphorylation. Which, with the let-7 repression may enhance tissue repair in adult tissue. The protein is Protein lin-28 homolog A (LIN28A) of Gallus gallus (Chicken).